The chain runs to 285 residues: Pantothenate synthetase (285 aa).

30-37 (MGNLHDGH) is an ATP binding site. Catalysis depends on His37, which acts as the Proton donor. Position 61 (Gln61) interacts with (R)-pantoate. Gln61 is a binding site for beta-alanine. 149 to 152 (GEKD) is an ATP binding site. Gln155 is a binding site for (R)-pantoate. ATP is bound by residues Ile178 and 186–189 (LSSR).

It belongs to the pantothenate synthetase family. Homodimer.

It localises to the cytoplasm. It carries out the reaction (R)-pantoate + beta-alanine + ATP = (R)-pantothenate + AMP + diphosphate + H(+). It participates in cofactor biosynthesis; (R)-pantothenate biosynthesis; (R)-pantothenate from (R)-pantoate and beta-alanine: step 1/1. In terms of biological role, catalyzes the condensation of pantoate with beta-alanine in an ATP-dependent reaction via a pantoyl-adenylate intermediate. The chain is Pantothenate synthetase from Buchnera aphidicola subsp. Acyrthosiphon pisum (strain 5A).